Reading from the N-terminus, the 344-residue chain is Protein RecA (344 aa).

66 to 73 (GPESSGKT) is a binding site for ATP.

The protein belongs to the RecA family.

The protein localises to the cytoplasm. Functionally, can catalyze the hydrolysis of ATP in the presence of single-stranded DNA, the ATP-dependent uptake of single-stranded DNA by duplex DNA, and the ATP-dependent hybridization of homologous single-stranded DNAs. It interacts with LexA causing its activation and leading to its autocatalytic cleavage. The sequence is that of Protein RecA from Methylobacillus flagellatus (strain ATCC 51484 / DSM 6875 / VKM B-1610 / KT).